We begin with the raw amino-acid sequence, 210 residues long: Large ribosomal subunit protein uL15 (210 aa).

2 disordered regions span residues 1–64 and 76–104; these read MADD…AAPR and AAGAKKEKTRVGRGEGSKGKTAGRGTKGT. The segment covering 9 to 54 has biased composition (low complexity); that stretch reads EAAAKPVAEKATATALAKKAPAKAAAADKAAPAAKGETVAAKPAKA. The span at 79–93 shows a compositional bias: basic and acidic residues; that stretch reads AKKEKTRVGRGEGSK.

It belongs to the universal ribosomal protein uL15 family. In terms of assembly, part of the 50S ribosomal subunit.

Binds to the 23S rRNA. The polypeptide is Large ribosomal subunit protein uL15 (Leifsonia xyli subsp. xyli (strain CTCB07)).